We begin with the raw amino-acid sequence, 494 residues long: Glycogen synthase (494 aa).

Lys-24 is an ADP-alpha-D-glucose binding site.

Belongs to the glycosyltransferase 1 family. Bacterial/plant glycogen synthase subfamily.

The catalysed reaction is [(1-&gt;4)-alpha-D-glucosyl](n) + ADP-alpha-D-glucose = [(1-&gt;4)-alpha-D-glucosyl](n+1) + ADP + H(+). It functions in the pathway glycan biosynthesis; glycogen biosynthesis. Synthesizes alpha-1,4-glucan chains using ADP-glucose. In Aromatoleum aromaticum (strain DSM 19018 / LMG 30748 / EbN1) (Azoarcus sp. (strain EbN1)), this protein is Glycogen synthase.